The following is a 343-amino-acid chain: Cell cycle control protein 50C (343 aa).

Residues 1–34 (MKRKCQDYESRLPDNTAVKQQQLPAFRLQLTASE) are Cytoplasmic-facing. The helical transmembrane segment at 35 to 55 (ILSGFFAIGLFCLGMGIILLL) threads the bilayer. Residues 56–306 (SAKSIKEVEI…STLTWSGGSS (251 aa)) lie on the Extracellular side of the membrane. 4 N-linked (GlcNAc...) asparagine glycosylation sites follow: Asn66, Asn164, Asn205, and Asn265. A helical transmembrane segment spans residues 307 to 327 (LFLALAYLVTGAVTLLASFSM). The Cytoplasmic segment spans residues 328-343 (MALHLKLKERKTFFLQ).

Belongs to the CDC50/LEM3 family.

It localises to the membrane. This Bos taurus (Bovine) protein is Cell cycle control protein 50C (TMEM30C).